The chain runs to 199 residues: Adenylyl-sulfate kinase (199 aa).

A disordered region spans residues 1 to 22; that stretch reads MSESNHITWHDSEVTKKQRQHK. Residue 34–41 participates in ATP binding; the sequence is GLSGSGKS. S108 (phosphoserine intermediate) is an active-site residue.

The protein belongs to the APS kinase family.

It carries out the reaction adenosine 5'-phosphosulfate + ATP = 3'-phosphoadenylyl sulfate + ADP + H(+). It functions in the pathway sulfur metabolism; hydrogen sulfide biosynthesis; sulfite from sulfate: step 2/3. In terms of biological role, catalyzes the synthesis of activated sulfate. This Staphylococcus epidermidis (strain ATCC 12228 / FDA PCI 1200) protein is Adenylyl-sulfate kinase.